We begin with the raw amino-acid sequence, 261 residues long: Cytochrome c oxidase subunit 3 (261 aa).

Residues 1 to 15 (MTHQTHAYHMVNPSP) lie on the Mitochondrial matrix side of the membrane. Residues 16–34 (WPLTGALSALLMTSGLTMW) traverse the membrane as a helical segment. Over 35–40 (FHYNST) the chain is Mitochondrial intermembrane. A helical transmembrane segment spans residues 41–66 (ILLMLGLTTNMLTMYQWWRDIIREST). At 67-72 (FQGHHT) the chain is on the mitochondrial matrix side. A helical transmembrane segment spans residues 73-105 (PTVQKGLRYGMILFIISEVLFFTGFFWAFYHSS). Residues 106–128 (LAPTPELGGCWPPTGIHPLNPLE) lie on the Mitochondrial intermembrane side of the membrane. The helical transmembrane segment at 129–152 (VPLLNTSVLLASGVSITWAHHSLM) threads the bilayer. The Mitochondrial matrix portion of the chain corresponds to 153-155 (EGD). Residues 156–183 (RNHMLQALFITIALGIYFTLLQASEYYE) form a helical membrane-spanning segment. The Mitochondrial intermembrane segment spans residues 184 to 190 (APFTISD). The helical transmembrane segment at 191 to 223 (GVYGSTFFVATGFHGLHVIIGSTFLIVCFFRQL) threads the bilayer. Over 224-232 (KFHFTSSHH) the chain is Mitochondrial matrix. The chain crosses the membrane as a helical span at residues 233–256 (FGFEAAAWYWHFVDVVWLFLYVSI). Residues 257 to 261 (YWWGS) are Mitochondrial intermembrane-facing.

The protein belongs to the cytochrome c oxidase subunit 3 family. Component of the cytochrome c oxidase (complex IV, CIV), a multisubunit enzyme composed of 14 subunits. The complex is composed of a catalytic core of 3 subunits MT-CO1, MT-CO2 and MT-CO3, encoded in the mitochondrial DNA, and 11 supernumerary subunits COX4I, COX5A, COX5B, COX6A, COX6B, COX6C, COX7A, COX7B, COX7C, COX8 and NDUFA4, which are encoded in the nuclear genome. The complex exists as a monomer or a dimer and forms supercomplexes (SCs) in the inner mitochondrial membrane with NADH-ubiquinone oxidoreductase (complex I, CI) and ubiquinol-cytochrome c oxidoreductase (cytochrome b-c1 complex, complex III, CIII), resulting in different assemblies (supercomplex SCI(1)III(2)IV(1) and megacomplex MCI(2)III(2)IV(2)).

The protein localises to the mitochondrion inner membrane. The catalysed reaction is 4 Fe(II)-[cytochrome c] + O2 + 8 H(+)(in) = 4 Fe(III)-[cytochrome c] + 2 H2O + 4 H(+)(out). Its function is as follows. Component of the cytochrome c oxidase, the last enzyme in the mitochondrial electron transport chain which drives oxidative phosphorylation. The respiratory chain contains 3 multisubunit complexes succinate dehydrogenase (complex II, CII), ubiquinol-cytochrome c oxidoreductase (cytochrome b-c1 complex, complex III, CIII) and cytochrome c oxidase (complex IV, CIV), that cooperate to transfer electrons derived from NADH and succinate to molecular oxygen, creating an electrochemical gradient over the inner membrane that drives transmembrane transport and the ATP synthase. Cytochrome c oxidase is the component of the respiratory chain that catalyzes the reduction of oxygen to water. Electrons originating from reduced cytochrome c in the intermembrane space (IMS) are transferred via the dinuclear copper A center (CU(A)) of subunit 2 and heme A of subunit 1 to the active site in subunit 1, a binuclear center (BNC) formed by heme A3 and copper B (CU(B)). The BNC reduces molecular oxygen to 2 water molecules using 4 electrons from cytochrome c in the IMS and 4 protons from the mitochondrial matrix. The polypeptide is Cytochrome c oxidase subunit 3 (MT-CO3) (Tragelaphus imberbis (Lesser kudu)).